An 884-amino-acid polypeptide reads, in one-letter code: Probable leucine-rich repeat receptor-like protein kinase At2g28990 (884 aa).

A signal peptide spans 1-19 (MKIHLLLAMIGTFVVIIGA). At 20 to 508 (QDQEGFISLD…TEKKNKFLLP (489 aa)) the chain is on the extracellular side. N70, N177, N217, N231, N251, N284, N298, N334, N418, N427, N438, N459, and N464 each carry an N-linked (GlcNAc...) asparagine glycan. LRR repeat units follow at residues 404–427 (SPTIISLDLSKSGLNGSIPQILQN), 428–451 (FTQLQELDLSNNSLTGPVPIFLAN), and 452–476 (MKTLSLINLSGNNLSGSVPQALLDK). A helical membrane pass occupies residues 509–529 (VIASAASLVIVVVVVALFFVF). At 530–884 (RKKKASPSNL…IYNEVIPQAR (355 aa)) the chain is on the cytoplasmic side. The interval 535–559 (SPSNLHAPPSMPVSNPGHNSQSESS) is disordered. Polar residues predominate over residues 546 to 559 (PVSNPGHNSQSESS). Position 568 is a phosphothreonine (T568). Positions 577–850 (NNFDKALGEG…RVVNELKECL (274 aa)) constitute a Protein kinase domain. Residues 583–591 (LGEGGFGVV) and K605 each bind ATP. Residue Y650 is modified to Phosphotyrosine. D702 acts as the Proton acceptor in catalysis. The residue at position 736 (S736) is a Phosphoserine. T737 and T742 each carry phosphothreonine. Y750 carries the post-translational modification Phosphotyrosine.

The protein belongs to the protein kinase superfamily. Ser/Thr protein kinase family. In terms of assembly, binds to the ammonium transporter AMT1-1.

The protein resides in the membrane. The catalysed reaction is L-seryl-[protein] + ATP = O-phospho-L-seryl-[protein] + ADP + H(+). The enzyme catalyses L-threonyl-[protein] + ATP = O-phospho-L-threonyl-[protein] + ADP + H(+). The sequence is that of Probable leucine-rich repeat receptor-like protein kinase At2g28990 from Arabidopsis thaliana (Mouse-ear cress).